The chain runs to 418 residues: Glutamyl-tRNA reductase (418 aa).

Substrate is bound by residues 49 to 52 (TCNR), Ser-109, 114 to 116 (EPQ), and Gln-120. Cys-50 serves as the catalytic Nucleophile. An NADP(+)-binding site is contributed by 189–194 (GAGETI).

It belongs to the glutamyl-tRNA reductase family. As to quaternary structure, homodimer.

The enzyme catalyses (S)-4-amino-5-oxopentanoate + tRNA(Glu) + NADP(+) = L-glutamyl-tRNA(Glu) + NADPH + H(+). Its pathway is porphyrin-containing compound metabolism; protoporphyrin-IX biosynthesis; 5-aminolevulinate from L-glutamyl-tRNA(Glu): step 1/2. Its function is as follows. Catalyzes the NADPH-dependent reduction of glutamyl-tRNA(Glu) to glutamate 1-semialdehyde (GSA). The chain is Glutamyl-tRNA reductase from Escherichia coli O7:K1 (strain IAI39 / ExPEC).